The chain runs to 318 residues: Probable casein kinase I homolog ECU11_1980 (318 aa).

Residues 8 to 276 (YTICREIGKG…YLNSLLDKIF (269 aa)) form the Protein kinase domain. ATP contacts are provided by residues 14-22 (IGKGGFGKV) and lysine 37. The Proton acceptor role is filled by aspartate 129.

The protein belongs to the protein kinase superfamily. CK1 Ser/Thr protein kinase family. Casein kinase I subfamily.

The protein resides in the nucleus. It carries out the reaction L-seryl-[protein] + ATP = O-phospho-L-seryl-[protein] + ADP + H(+). The enzyme catalyses L-threonyl-[protein] + ATP = O-phospho-L-threonyl-[protein] + ADP + H(+). Functionally, involved in DNA repair. May regulate the activity of protein(s) involved in double strand break repair caused by gamma rays. The sequence is that of Probable casein kinase I homolog ECU11_1980 from Encephalitozoon cuniculi (strain GB-M1) (Microsporidian parasite).